We begin with the raw amino-acid sequence, 65 residues long: Metallothionein (65 aa).

Belongs to the metallothionein superfamily. Type 4 family.

Its function is as follows. Metallothioneins have a high content of cysteine residues that bind various heavy metals. In Paracentrotus lividus (Common sea urchin), this protein is Metallothionein.